We begin with the raw amino-acid sequence, 194 residues long: Imidazoleglycerol-phosphate dehydratase (194 aa).

The protein belongs to the imidazoleglycerol-phosphate dehydratase family.

Its subcellular location is the cytoplasm. It carries out the reaction D-erythro-1-(imidazol-4-yl)glycerol 3-phosphate = 3-(imidazol-4-yl)-2-oxopropyl phosphate + H2O. It functions in the pathway amino-acid biosynthesis; L-histidine biosynthesis; L-histidine from 5-phospho-alpha-D-ribose 1-diphosphate: step 6/9. This Bacillus cereus (strain ATCC 14579 / DSM 31 / CCUG 7414 / JCM 2152 / NBRC 15305 / NCIMB 9373 / NCTC 2599 / NRRL B-3711) protein is Imidazoleglycerol-phosphate dehydratase.